Reading from the N-terminus, the 548-residue chain is Membrane protein insertase YidC (548 aa).

Residues 6–26 (NLLIIALLFVSFMIWQAWEQD) form a helical membrane-spanning segment. A disordered region spans residues 28-52 (NPQPQQQTTQTTTTAAGSAADQGVP). The span at 29 to 41 (PQPQQQTTQTTTT) shows a compositional bias: low complexity. 4 consecutive transmembrane segments (helical) span residues 345-365 (KFIHSFLGNWGFSIIVITFIV), 420-440 (LGGCFPLIIQMPIFLALYYML), 458-478 (LSAQDPYYILPIIMGATMFFI), and 499-519 (PVIFTVFFLWFPSGLVVYYIV).

This sequence belongs to the OXA1/ALB3/YidC family. Type 1 subfamily. Interacts with the Sec translocase complex via SecD. Specifically interacts with transmembrane segments of nascent integral membrane proteins during membrane integration.

It localises to the cell inner membrane. Required for the insertion and/or proper folding and/or complex formation of integral membrane proteins into the membrane. Involved in integration of membrane proteins that insert both dependently and independently of the Sec translocase complex, as well as at least some lipoproteins. Aids folding of multispanning membrane proteins. This chain is Membrane protein insertase YidC, found in Klebsiella pneumoniae (strain 342).